The primary structure comprises 137 residues: Small ribosomal subunit protein uS12 (137 aa).

Aspartate 102 carries the post-translational modification 3-methylthioaspartic acid.

It belongs to the universal ribosomal protein uS12 family. Part of the 30S ribosomal subunit. Contacts proteins S8 and S17. May interact with IF1 in the 30S initiation complex.

Functionally, with S4 and S5 plays an important role in translational accuracy. In terms of biological role, interacts with and stabilizes bases of the 16S rRNA that are involved in tRNA selection in the A site and with the mRNA backbone. Located at the interface of the 30S and 50S subunits, it traverses the body of the 30S subunit contacting proteins on the other side and probably holding the rRNA structure together. The combined cluster of proteins S8, S12 and S17 appears to hold together the shoulder and platform of the 30S subunit. This chain is Small ribosomal subunit protein uS12, found in Phytoplasma mali (strain AT).